Here is a 422-residue protein sequence, read N- to C-terminus: O-methyltransferase kk1A (422 aa).

Asp-277 serves as a coordination point for S-adenosyl-L-methionine. His-320 (proton acceptor) is an active-site residue.

This sequence belongs to the class I-like SAM-binding methyltransferase superfamily. Cation-independent O-methyltransferase family.

It functions in the pathway secondary metabolite biosynthesis. Its function is as follows. O-methyltransferase; part of the gene cluster that mediates the biosynthesis of KK-1, a novel cyclic depsipeptide with 10 residues which is a promising active compound with high activity against many plant pathogens, especially Botrytis cinerea. Within the pathway, kk1A is responsible for the O-methylation of tyrosine as a free amino acid before its activation as an aminoacyl-AMP by the corresponding A domain of kk1B. The nonribosomal peptide synthetase (NRPS) kk1B catalyzes the elongation and cyclization of the decapeptide chain composed of 1 D-lactic acid residue (D-Lac), 1 pipecolic acid residue (Pip), 1 aspartic acid residue (Asp), 1 isoleucine residue (Ile), 1 glycine residue (Gly), 1 tyrosine residue (Tyr) and 4 valine residues (Val). The Asp, Ile and 3 Val residues are N-methylated by the 5 methyltransferase domains from the NRPS (found in modules 3, 5, 6, 7 and 9), whereas the Tyr residue is O-methylated by the cluster encoded O-methyltransferase kk1A. The thioesterase kk1J is likely to be involved in the corrective mechanism of peptide chain synthesis. The D-lactate dehydrogenase kk1H is involved in the synthesis of D-lactic acid from pyruvic acid, which is recognized by the A domain of the first kk1B module. The pyrroline-5-carboxylate reductase kk1I is involved in the synthesis of the L-pipecolic acid residue of KK-1 from delta-1-pyrroline-5-carboxylate (P5C), a metabolic intermediate of lysine. It is still unclear how kk1C and kk1D are involved in the production of KK-1. The polypeptide is O-methyltransferase kk1A (Curvularia clavata).